A 402-amino-acid chain; its full sequence is MSVAFASARPRGKGEVTQQTIQKMLDENHHLIQCILDYQSKGKTAECTQYQQILHRNLVYLATIADSNQNMQSLLPAPPTQNMNLGPGALSQSGSSQGLHPQGSLSDTVSTGLPPASLMQGQIGNGPNHVSMQQTAQSTLPTTSMSLSGSGHGTGPGYSHSGPTSQSVPMQGQGAISNYVSRTNINMQSNPVSMMHQQAATSHYNSAQGGSQHYQGQAPIAMMGQGGQGGSMMGQRPMAPYRPSQQGSSQQYLGQEEYYSEQYSHSQGSAEPMSQQYYPDGHGDYAYQQSSYTEQSYDRSFEDPTQHYYEGGNSQYSQQQAGYQQGTAQQQTYSQQQYPNQQSYPGQQQGYGPAQGAPSQYSSYQQGQGQQYGSYRTSQTGPSAQQQRPYGYEQGQYGNYQQ.

The segment at 1–148 (MSVAFASARP…TLPTTSMSLS (148 aa)) is N-terminal auto-inhibitory domain; necessary for interaction with SMARCA4/BRG1. The SH2-binding signature appears at 50–53 (YQQI). 2 disordered regions span residues 72–171 (QSLL…VPMQ) and 221–402 (AMMG…NYQQ). The span at 85 to 106 (LGPGALSQSGSSQGLHPQGSLS) shows a compositional bias: low complexity. Polar residues-rich tracts occupy residues 128 to 149 (NHVSMQQTAQSTLPTTSMSLSG) and 161 to 171 (SGPTSQSVPMQ). Residues 149–238 (GSGHGTGPGY…GGSMMGQRPM (90 aa)) are methionine-rich intra-molecular domain. The segment covering 233–251 (MGQRPMAPYRPSQQGSSQQ) has biased composition (low complexity). The MFD domain stretch occupies residues 252 to 323 (YLGQEEYYSE…SQYSQQQAGY (72 aa)). Polar residues predominate over residues 261-277 (EQYSHSQGSAEPMSQQY). Residues 296–305 (SYDRSFEDPT) are compositionally biased toward basic and acidic residues. The segment covering 311 to 375 (GGNSQYSQQQ…QGQGQQYGSY (65 aa)) has biased composition (low complexity). The tract at residues 340 to 402 (NQQSYPGQQQ…EQGQYGNYQQ (63 aa)) is necessary for nuclear localization. The SH2-binding motif lies at 359–362 (SQYS). Positions 376–388 (RTSQTGPSAQQQR) are enriched in polar residues. Positions 377-385 (TSQTGPSAQ) match the SH3-binding motif. Residues 390 to 402 (YGYEQGQYGNYQQ) are compositionally biased toward low complexity. Positions 393–402 (EQGQYGNYQQ) are necessary for interaction with CREBBP and for the recruitment of CREBBP to the nuclear bodies. An SH2-binding motif is present at residues 397–400 (YGNY).

It belongs to the SS18 family. As to quaternary structure, homodimer. Dimerization may be necessary for its function in neuronal dendritic development. Interacts (via C-terminus) with CREBBP (via N-terminus), EP300 and SMARCA4/BRG1. Interacts with the nBAF complex. Association with CREBBP facilitates transcription while the association with SMARCA4/BRG1 suppresses CREST-mediated transcription in resting neurons.

It is found in the nucleus. The protein localises to the chromosome. Its subcellular location is the centromere. The protein resides in the kinetochore. Transcriptional activator which is required for calcium-dependent dendritic growth and branching in cortical neurons. Recruits CREB-binding protein (CREBBP) to nuclear bodies. Component of the CREST-BRG1 complex, a multiprotein complex that regulates promoter activation by orchestrating a calcium-dependent release of a repressor complex and a recruitment of an activator complex. In resting neurons, transcription of the c-FOS promoter is inhibited by BRG1-dependent recruitment of a phospho-RB1-HDAC1 repressor complex. Upon calcium influx, RB1 is dephosphorylated by calcineurin, which leads to release of the repressor complex. At the same time, there is increased recruitment of CREBBP to the promoter by a CREST-dependent mechanism, which leads to transcriptional activation. The CREST-BRG1 complex also binds to the NR2B promoter, and activity-dependent induction of NR2B expression involves a release of HDAC1 and recruitment of CREBBP. This is Calcium-responsive transactivator (Ss18l1) from Mus musculus (Mouse).